Consider the following 209-residue polypeptide: PF03932 family protein CutC (209 aa).

The protein belongs to the CutC family.

The protein localises to the cytoplasm. Its function is as follows. Might participate in the control of copper homeostasis; data from other bacteria suggests it is not involved. The protein is PF03932 family protein CutC of Enterococcus faecalis (strain ATCC 700802 / V583).